A 400-amino-acid polypeptide reads, in one-letter code: Serine/threonine transporter SstT (400 aa).

10 helical membrane passes run 11–31 (IGLV…GWLA), 45–65 (FVGA…MAAI), 81–101 (IMYM…SFLF), 138–158 (AIAE…GFAL), 175–195 (AISQ…LGLV), 213–233 (ILMV…PLII), 242–264 (YPLV…SSAA), 295–315 (MAGA…TLGI), 327–347 (LVAT…LLLI), and 354–374 (FSIP…IGVI).

It belongs to the dicarboxylate/amino acid:cation symporter (DAACS) (TC 2.A.23) family.

The protein localises to the cell inner membrane. The catalysed reaction is L-serine(in) + Na(+)(in) = L-serine(out) + Na(+)(out). It carries out the reaction L-threonine(in) + Na(+)(in) = L-threonine(out) + Na(+)(out). Involved in the import of serine and threonine into the cell, with the concomitant import of sodium (symport system). The protein is Serine/threonine transporter SstT of Psychrobacter cryohalolentis (strain ATCC BAA-1226 / DSM 17306 / VKM B-2378 / K5).